We begin with the raw amino-acid sequence, 278 residues long: Phosphatidylglycerol--prolipoprotein diacylglyceryl transferase (278 aa).

Helical transmembrane passes span 21 to 41, 54 to 74, and 88 to 108; these read WYGIIIAMGILLGYFIAQASV, IIFWSAIFGFIIARIYFVIFQ, and IWQGGIAIHGGLIGGFVTGII. Arg136 is a binding site for a 1,2-diacyl-sn-glycero-3-phospho-(1'-sn-glycerol). The next 3 helical transmembrane spans lie at 176 to 196, 202 to 222, and 234 to 254; these read QPTFLYESIWDVLGFVILILL, IGDTFCLYLIWYSIGRFFVEG, and IRIAQLMSIILIIIGVVIMIV.

The protein belongs to the Lgt family.

It localises to the cell membrane. The catalysed reaction is L-cysteinyl-[prolipoprotein] + a 1,2-diacyl-sn-glycero-3-phospho-(1'-sn-glycerol) = an S-1,2-diacyl-sn-glyceryl-L-cysteinyl-[prolipoprotein] + sn-glycerol 1-phosphate + H(+). It participates in protein modification; lipoprotein biosynthesis (diacylglyceryl transfer). Catalyzes the transfer of the diacylglyceryl group from phosphatidylglycerol to the sulfhydryl group of the N-terminal cysteine of a prolipoprotein, the first step in the formation of mature lipoproteins. This Staphylococcus saprophyticus subsp. saprophyticus (strain ATCC 15305 / DSM 20229 / NCIMB 8711 / NCTC 7292 / S-41) protein is Phosphatidylglycerol--prolipoprotein diacylglyceryl transferase.